A 440-amino-acid chain; its full sequence is Actin-like protein 7A (440 aa).

The disordered stretch occupies residues Met-1 to Ser-27. The required for interaction with TES stretch occupies residues Ala-36 to Lys-56.

The protein belongs to the actin family. As to quaternary structure, interacts (via N-terminus) with TES (via LIM domain 2). Heterodimer with TES; the heterodimer interacts with ENAH to form a heterotrimer. Interacts with ACTL9. Interacts with CYLC1; the interaction may be relevant for proper acrosome attachment to the nuclear envelope. As to expression, detected in testis. Detected at the acrosome of round spermatids (at protein level).

The protein resides in the cytoplasm. Its subcellular location is the cytoskeleton. It is found in the golgi apparatus. The protein localises to the nucleus. Essential for normal spermatogenesis and male fertility. Required for normal sperm head morphology, acroplaxome formation, acrosome attachment, and acrosome granule stability. May anchor and stabilize acrosomal adherence to the acroplaxome at least in part by facilitating the presence of F-actin in the subacrosomal space. May play an important role in formation and fusion of Golgi-derived vesicles during acrosome biogenesis. The chain is Actin-like protein 7A (Actl7a) from Rattus norvegicus (Rat).